The sequence spans 256 residues: 1-(5-phosphoribosyl)-5-[(5-phosphoribosylamino)methylideneamino] imidazole-4-carboxamide isomerase (256 aa).

D8 (proton acceptor) is an active-site residue. D129 functions as the Proton donor in the catalytic mechanism.

This sequence belongs to the HisA/HisF family.

The protein localises to the cytoplasm. The catalysed reaction is 1-(5-phospho-beta-D-ribosyl)-5-[(5-phospho-beta-D-ribosylamino)methylideneamino]imidazole-4-carboxamide = 5-[(5-phospho-1-deoxy-D-ribulos-1-ylimino)methylamino]-1-(5-phospho-beta-D-ribosyl)imidazole-4-carboxamide. It participates in amino-acid biosynthesis; L-histidine biosynthesis; L-histidine from 5-phospho-alpha-D-ribose 1-diphosphate: step 4/9. The chain is 1-(5-phosphoribosyl)-5-[(5-phosphoribosylamino)methylideneamino] imidazole-4-carboxamide isomerase from Syntrophobacter fumaroxidans (strain DSM 10017 / MPOB).